The following is a 426-amino-acid chain: Glutamate-1-semialdehyde 2,1-aminomutase (426 aa).

K268 bears the N6-(pyridoxal phosphate)lysine mark.

Belongs to the class-III pyridoxal-phosphate-dependent aminotransferase family. HemL subfamily. Requires pyridoxal 5'-phosphate as cofactor.

Its subcellular location is the cytoplasm. It catalyses the reaction (S)-4-amino-5-oxopentanoate = 5-aminolevulinate. Its pathway is porphyrin-containing compound metabolism; protoporphyrin-IX biosynthesis; 5-aminolevulinate from L-glutamyl-tRNA(Glu): step 2/2. This chain is Glutamate-1-semialdehyde 2,1-aminomutase, found in Saccharolobus islandicus (strain M.16.27) (Sulfolobus islandicus).